Consider the following 264-residue polypeptide: 3-methyl-2-oxobutanoate hydroxymethyltransferase (264 aa).

Residues D45 and D84 each coordinate Mg(2+). 3-methyl-2-oxobutanoate is bound by residues 45–46 (DS), D84, and K112. A Mg(2+)-binding site is contributed by E114. Catalysis depends on E181, which acts as the Proton acceptor.

Belongs to the PanB family. In terms of assembly, homodecamer; pentamer of dimers. The cofactor is Mg(2+).

It localises to the cytoplasm. It carries out the reaction 3-methyl-2-oxobutanoate + (6R)-5,10-methylene-5,6,7,8-tetrahydrofolate + H2O = 2-dehydropantoate + (6S)-5,6,7,8-tetrahydrofolate. It participates in cofactor biosynthesis; (R)-pantothenate biosynthesis; (R)-pantoate from 3-methyl-2-oxobutanoate: step 1/2. In terms of biological role, catalyzes the reversible reaction in which hydroxymethyl group from 5,10-methylenetetrahydrofolate is transferred onto alpha-ketoisovalerate to form ketopantoate. The chain is 3-methyl-2-oxobutanoate hydroxymethyltransferase from Shigella dysenteriae serotype 1 (strain Sd197).